We begin with the raw amino-acid sequence, 530 residues long: Chondroitin sulfate N-acetylgalactosaminyltransferase 1 (530 aa).

Topologically, residues 1 to 12 (MVRRGLLGWISR) are cytoplasmic. A helical; Signal-anchor for type II membrane protein transmembrane segment spans residues 13–33 (VVILLVLLCCAISVLYMLACT). Over 34–530 (PKGDQEQLGL…QKQKASSKKT (497 aa)) the chain is Lumenal. Positions 57-93 (AVLQEREEQHRNYVNSLKRQIAQLKDELQARSEQFRS) form a coiled coil. A disordered region spans residues 88–107 (SEQFRSGQDQASDATSLRSG). The span at 91–105 (FRSGQDQASDATSLR) shows a compositional bias: polar residues. N-linked (GlcNAc...) asparagine glycosylation is found at N313 and N322. The a divalent metal cation site is built by D358 and H475.

It belongs to the chondroitin N-acetylgalactosaminyltransferase family.

It is found in the golgi apparatus. It localises to the golgi stack membrane. It catalyses the reaction 3-O-(beta-D-GlcA-(1-&gt;3)-beta-D-Gal-(1-&gt;3)-beta-D-Gal-(1-&gt;4)-beta-D-Xyl)-L-seryl-[protein] + UDP-N-acetyl-alpha-D-galactosamine = 3-O-(beta-D-GalNAc-(1-&gt;4)-beta-D-GlcA-(1-&gt;3)-beta-D-Gal-(1-&gt;3)-beta-D-Gal-(1-&gt;4)-beta-D-Xyl)-L-seryl-[protein] + UDP + H(+). Transfers 1,4-N-acetylgalactosamine (GalNAc) from UDP-GalNAc to the non-reducing end of glucuronic acid (GlcUA). Required for addition of the first GalNAc to the core tetrasaccharide linker and for elongation of chondroitin chains. Important role in chondroitin chain biosynthesis in cartilage formation, and subsequent endochondral ossification. Moreover, is involved in the metabolism of aggrecan. The chain is Chondroitin sulfate N-acetylgalactosaminyltransferase 1 from Mus musculus (Mouse).